The chain runs to 147 residues: Large ribosomal subunit protein uL15 (147 aa).

Over residues 1 to 13 (MKLENLKSKEGSR) the composition is skewed to basic and acidic residues. Positions 1 to 54 (MKLENLKSKEGSRHKTKRVGRGFGSGIGKTSTRGSKGQKSRKSGHTRPGFEGGQ) are disordered. Residues 36 to 45 (KGQKSRKSGH) are compositionally biased toward basic residues.

It belongs to the universal ribosomal protein uL15 family. In terms of assembly, part of the 50S ribosomal subunit.

Binds to the 23S rRNA. This is Large ribosomal subunit protein uL15 from Malacoplasma penetrans (strain HF-2) (Mycoplasma penetrans).